Reading from the N-terminus, the 136-residue chain is Secreted RxLR effector protein 10 (136 aa).

Residues 1-22 (MRVLNFVLTTTVVLLTSSEGIA) form the signal peptide. Residues 42–56 (RSLRATENPGSDESR) carry the RxLR-dEER motif. Residues 42 to 78 (RSLRATENPGSDESRLNEKDTGFDPDGSSSKEDEDIG) form a disordered region. A compositionally biased stretch (basic and acidic residues) spans 53-63 (DESRLNEKDTG).

It belongs to the RxLR effector family.

The protein localises to the secreted. Its subcellular location is the host cytoplasm. It is found in the host nucleus. Functionally, effector that acts as a broad suppressor of cell death to interrupt plant immunity. Inhibits cell death induced by cell death-inducing proteins, including the PAMP elicitor INF1 from P.infestans. The chain is Secreted RxLR effector protein 10 from Plasmopara viticola (Downy mildew of grapevine).